Reading from the N-terminus, the 309-residue chain is 2-phospho-L-lactate transferase (309 aa).

Residues aspartate 50 and lysine 89 each contribute to the 7,8-didemethyl-8-hydroxy-5-deazariboflavin site.

Belongs to the CofD family. As to quaternary structure, homodimer. Requires Mg(2+) as cofactor.

The catalysed reaction is (2S)-lactyl-2-diphospho-5'-guanosine + 7,8-didemethyl-8-hydroxy-5-deazariboflavin = oxidized coenzyme F420-0 + GMP + H(+). It participates in cofactor biosynthesis; coenzyme F420 biosynthesis. In terms of biological role, catalyzes the transfer of the 2-phospholactate moiety from (2S)-lactyl-2-diphospho-5'-guanosine to 7,8-didemethyl-8-hydroxy-5-deazariboflavin (FO) with the formation of oxidized coenzyme F420-0 and GMP. The protein is 2-phospho-L-lactate transferase of Methanococcus maripaludis (strain C6 / ATCC BAA-1332).